We begin with the raw amino-acid sequence, 412 residues long: Serine hydroxymethyltransferase (412 aa).

(6S)-5,6,7,8-tetrahydrofolate contacts are provided by residues L117 and 121–123 (GHL). At K226 the chain carries N6-(pyridoxal phosphate)lysine. 349–351 (SPF) lines the (6S)-5,6,7,8-tetrahydrofolate pocket.

This sequence belongs to the SHMT family. In terms of assembly, homodimer. Pyridoxal 5'-phosphate serves as cofactor.

Its subcellular location is the cytoplasm. The catalysed reaction is (6R)-5,10-methylene-5,6,7,8-tetrahydrofolate + glycine + H2O = (6S)-5,6,7,8-tetrahydrofolate + L-serine. It functions in the pathway one-carbon metabolism; tetrahydrofolate interconversion. It participates in amino-acid biosynthesis; glycine biosynthesis; glycine from L-serine: step 1/1. Its function is as follows. Catalyzes the reversible interconversion of serine and glycine with tetrahydrofolate (THF) serving as the one-carbon carrier. This reaction serves as the major source of one-carbon groups required for the biosynthesis of purines, thymidylate, methionine, and other important biomolecules. Also exhibits THF-independent aldolase activity toward beta-hydroxyamino acids, producing glycine and aldehydes, via a retro-aldol mechanism. This is Serine hydroxymethyltransferase from Nitratidesulfovibrio vulgaris (strain ATCC 29579 / DSM 644 / CCUG 34227 / NCIMB 8303 / VKM B-1760 / Hildenborough) (Desulfovibrio vulgaris).